A 502-amino-acid chain; its full sequence is UPF0371 protein CLM_0396 (502 aa).

This sequence belongs to the UPF0371 family.

This chain is UPF0371 protein CLM_0396, found in Clostridium botulinum (strain Kyoto / Type A2).